The sequence spans 471 residues: Arginine biosynthesis bifunctional protein ArgJ, mitochondrial (471 aa).

The N-terminal 33 residues, 1–33, are a transit peptide targeting the mitochondrion; it reads MAMAGCNGFFLHQLRQPRLQLARQLGRTPSRAY. Residues T201, K230, T241, E327, N466, and T471 each contribute to the substrate site. Residue T241 is the Nucleophile of the active site.

Belongs to the ArgJ family. In terms of assembly, heterodimer of an alpha and a beta chain. In terms of processing, the alpha and beta chains are autoproteolytically processed from a single precursor protein within the mitochondrion.

It is found in the mitochondrion matrix. It catalyses the reaction N(2)-acetyl-L-ornithine + L-glutamate = N-acetyl-L-glutamate + L-ornithine. The catalysed reaction is L-glutamate + acetyl-CoA = N-acetyl-L-glutamate + CoA + H(+). It functions in the pathway amino-acid biosynthesis; L-arginine biosynthesis; L-ornithine and N-acetyl-L-glutamate from L-glutamate and N(2)-acetyl-L-ornithine (cyclic): step 1/1. The protein operates within amino-acid biosynthesis; L-arginine biosynthesis; N(2)-acetyl-L-ornithine from L-glutamate: step 1/4. Functionally, catalyzes two activities which are involved in the cyclic version of arginine biosynthesis: the synthesis of acetylglutamate from glutamate and acetyl-CoA, and of ornithine by transacetylation between acetylornithine and glutamate. This is Arginine biosynthesis bifunctional protein ArgJ, mitochondrial from Chaetomium globosum (strain ATCC 6205 / CBS 148.51 / DSM 1962 / NBRC 6347 / NRRL 1970) (Soil fungus).